We begin with the raw amino-acid sequence, 259 residues long: ATP synthase subunit a (259 aa).

The next 5 helical transmembrane spans lie at 29–49, 89–109, 132–154, 209–229, and 230–250; these read TVNIDSMVFSVVLGTLFIWLF, LIAPLALTIFVWIFLMNAMDL, SADVNITLSMALGVFFLILFYSI, IFILIAAMLPWWSQWFLNVPW, and AIFHILIITLQAFIFMVLTIV.

The protein belongs to the ATPase A chain family. In terms of assembly, F-type ATPases have 2 components, CF(1) - the catalytic core - and CF(0) - the membrane proton channel. CF(1) has five subunits: alpha(3), beta(3), gamma(1), delta(1), epsilon(1). CF(0) has three main subunits: a(1), b(2) and c(9-12). The alpha and beta chains form an alternating ring which encloses part of the gamma chain. CF(1) is attached to CF(0) by a central stalk formed by the gamma and epsilon chains, while a peripheral stalk is formed by the delta and b chains.

Its subcellular location is the cell inner membrane. Functionally, key component of the proton channel; it plays a direct role in the translocation of protons across the membrane. The polypeptide is ATP synthase subunit a (Tolumonas auensis (strain DSM 9187 / NBRC 110442 / TA 4)).